A 236-amino-acid polypeptide reads, in one-letter code: MICOS complex subunit MIC25 (236 aa).

Basic and acidic residues predominate over residues 1-11 (MGSAESREGRR). A disordered region spans residues 1–22 (MGSAESREGRRASFGMDEEERV). Gly-2 carries N-myristoyl glycine lipidation. Phosphoserine is present on residues Ser-13 and Ser-31. Disordered regions lie at residues 34–86 (VVNR…VQVD) and 109–132 (EREA…DQEK). Residues 48-58 (GLLAPPAAALG) show a composition bias toward low complexity. Basic and acidic residues-rich tracts occupy residues 62 to 71 (GREKDSKPPR) and 122 to 132 (RRGEGGVDQEK). A coiled-coil region spans residues 127 to 167 (GVDQEKQRLAQRARELESQEEELRCRDAFYKEQLGRLERQN). Residues 195–236 (EPVCSGLQAQILRCYRDRLQEVLLCADLVRAYQHCVSSAHKG) enclose the CHCH domain. 2 short sequence motifs (cx9C motif) span residues 198–208 (CSGLQAQILRC) and 219–229 (CADLVRAYQHC). Cystine bridges form between Cys-198–Cys-229 and Cys-208–Cys-219.

It belongs to the MICOS complex subunit Mic19 family. Metazoan Mic25 subfamily. In terms of assembly, component of the mitochondrial contact site and cristae organizing system (MICOS) complex, composed of at least MICOS10/MIC10, CHCHD3/MIC19, CHCHD6/MIC25, APOOL/MIC27, IMMT/MIC60, APOO/MIC23/MIC26 and MICOS13/MIC13. This complex was also known under the names MINOS or MitOS complex. The MICOS complex associates with mitochondrial outer membrane proteins SAMM50, MTX1 and MTX2 (together described as components of the mitochondrial outer membrane sorting assembly machinery (SAM) complex) and DNAJC11, mitochondrial inner membrane protein TMEM11 and with HSPA9. The MICOS and SAM complexes together with DNAJC11 are part of a large protein complex spanning both membranes termed the mitochondrial intermembrane space bridging (MIB) complex. Interacts with DISC1. Interacts with IMMT/MIC60.

The protein localises to the mitochondrion inner membrane. Its subcellular location is the mitochondrion. Component of the MICOS complex, a large protein complex of the mitochondrial inner membrane that plays crucial roles in the maintenance of crista junctions, inner membrane architecture, and formation of contact sites to the outer membrane. In Bos taurus (Bovine), this protein is MICOS complex subunit MIC25 (CHCHD6).